A 270-amino-acid chain; its full sequence is Putative pyruvate, phosphate dikinase regulatory protein (270 aa).

148–155 contacts ADP; the sequence is GISRTSKT.

Belongs to the pyruvate, phosphate/water dikinase regulatory protein family. PDRP subfamily.

It catalyses the reaction N(tele)-phospho-L-histidyl/L-threonyl-[pyruvate, phosphate dikinase] + ADP = N(tele)-phospho-L-histidyl/O-phospho-L-threonyl-[pyruvate, phosphate dikinase] + AMP + H(+). It carries out the reaction N(tele)-phospho-L-histidyl/O-phospho-L-threonyl-[pyruvate, phosphate dikinase] + phosphate + H(+) = N(tele)-phospho-L-histidyl/L-threonyl-[pyruvate, phosphate dikinase] + diphosphate. Functionally, bifunctional serine/threonine kinase and phosphorylase involved in the regulation of the pyruvate, phosphate dikinase (PPDK) by catalyzing its phosphorylation/dephosphorylation. The polypeptide is Putative pyruvate, phosphate dikinase regulatory protein (Bacillus cereus (strain AH187)).